Consider the following 536-residue polypeptide: CTP synthase (536 aa).

The amidoligase domain stretch occupies residues 1–267 (MSKFVFVTGG…CKETLNYLEL (267 aa)). Residue Ser13 participates in CTP binding. Position 13 (Ser13) interacts with UTP. ATP-binding positions include 14 to 19 (SIGKGI) and Asp71. Asp71 and Glu141 together coordinate Mg(2+). Residues 148–150 (DIE), 188–193 (KTKPTQ), and Lys224 each bind CTP. Residues 188–193 (KTKPTQ) and Lys224 contribute to the UTP site. Positions 292–534 (KVALVGKYIE…IKASQDKLTQ (243 aa)) constitute a Glutamine amidotransferase type-1 domain. L-glutamine is bound at residue Gly354. Cys381 functions as the Nucleophile; for glutamine hydrolysis in the catalytic mechanism. Residues 382 to 385 (LGMQ), Glu405, and Arg462 each bind L-glutamine. Active-site residues include His507 and Glu509.

The protein belongs to the CTP synthase family. As to quaternary structure, homotetramer.

The catalysed reaction is UTP + L-glutamine + ATP + H2O = CTP + L-glutamate + ADP + phosphate + 2 H(+). It carries out the reaction L-glutamine + H2O = L-glutamate + NH4(+). The enzyme catalyses UTP + NH4(+) + ATP = CTP + ADP + phosphate + 2 H(+). The protein operates within pyrimidine metabolism; CTP biosynthesis via de novo pathway; CTP from UDP: step 2/2. Allosterically activated by GTP, when glutamine is the substrate; GTP has no effect on the reaction when ammonia is the substrate. The allosteric effector GTP functions by stabilizing the protein conformation that binds the tetrahedral intermediate(s) formed during glutamine hydrolysis. Inhibited by the product CTP, via allosteric rather than competitive inhibition. In terms of biological role, catalyzes the ATP-dependent amination of UTP to CTP with either L-glutamine or ammonia as the source of nitrogen. Regulates intracellular CTP levels through interactions with the four ribonucleotide triphosphates. The chain is CTP synthase from Prochlorococcus marinus (strain MIT 9301).